The sequence spans 490 residues: Hippocampus abundant transcript 1 protein (490 aa).

An N-acetylmethionine modification is found at methionine 1. Residues 1 to 40 lie on the Extracellular side of the membrane; it reads MTQGKKKKRAANRSIMLAKKIIIKDGGTPQGIGSPSVYHA. An N-linked (GlcNAc...) asparagine glycan is attached at asparagine 12. The helical transmembrane segment at 41-61 threads the bilayer; it reads VIVIFLEFFAWGLLTAPTLVV. The Cytoplasmic portion of the chain corresponds to 62-74; it reads LHETFPKHTFLMN. The helical transmembrane segment at 75–95 threads the bilayer; sequence GLIQGVKGLLSFLSAPLIGAL. The Extracellular segment spans residues 96–103; sequence SDVWGRKS. Residues 104 to 124 form a helical membrane-spanning segment; sequence FLLLTVFFTCAPIPLMKISPW. At 125 to 126 the chain is on the cytoplasmic side; sequence WY. Residues 127-147 traverse the membrane as a helical segment; that stretch reads FAVISVSGVFAVTFSVVFAYV. Residues 148–160 are Extracellular-facing; it reads ADITQEHERSMAY. A helical transmembrane segment spans residues 161 to 181; it reads GLVSATFAASLVTSPAIGAYL. The Cytoplasmic segment spans residues 182–188; sequence GRVYGDS. A helical membrane pass occupies residues 189 to 209; sequence LVVVLATAIALLDICFILVAV. The Extracellular portion of the chain corresponds to 210-243; sequence PESLPEKMRPASWGAPISWEQADPFASLKKVGQD. A helical transmembrane segment spans residues 244–264; it reads SIVLLICITVFLSYLPEAGQY. Over 265-284 the chain is Cytoplasmic; the sequence is SSFFLYLRQIMKFSPESVAA. The chain crosses the membrane as a helical span at residues 285-305; it reads FIAVLGILSIIAQTIVLSLLM. Over 306–313 the chain is Extracellular; that stretch reads RSIGNKNT. A helical membrane pass occupies residues 314 to 334; sequence ILLGLGFQILQLAWYGFGSEP. Over 335–337 the chain is Cytoplasmic; it reads WMM. The chain crosses the membrane as a helical span at residues 338–358; it reads WAAGAVAAMSSITFPAVSALV. Topologically, residues 359–379 are extracellular; sequence SRTADADQQGVVQGMITGIRG. Residues 380-400 form a helical membrane-spanning segment; it reads LCNGLGPALYGFIFYIFHVEL. The Cytoplasmic portion of the chain corresponds to 401 to 427; that stretch reads KELPITGTDLGTNTSPQHHFEQNSIIP. A helical membrane pass occupies residues 428–448; that stretch reads GPPFLFGACSVLLALLVALFI. Over 449–490 the chain is Extracellular; it reads PEHTNLSLRSSSWRKHCGSHSHPHSTQAPGEAKEPLLQDTNV. Asparagine 453 is a glycosylation site (N-linked (GlcNAc...) asparagine). Residues 466–490 form a disordered region; sequence GSHSHPHSTQAPGEAKEPLLQDTNV.

It belongs to the major facilitator superfamily. In terms of tissue distribution, expressed in various tissues.

It localises to the membrane. The polypeptide is Hippocampus abundant transcript 1 protein (Mus musculus (Mouse)).